A 1159-amino-acid chain; its full sequence is Phosphatidylinositol 3-kinase age-1 (1159 aa).

A compositionally biased stretch (polar residues) spans 1–25 (MSMGRSSSTTFRNRTASHGSRSLGS). The tract at residues 1 to 28 (MSMGRSSSTTFRNRTASHGSRSLGSAET) is disordered. The 101-residue stretch at 79-179 (SEGVADMIVL…FPMLFLFEPD (101 aa)) folds into the PI3K-ABD domain. One can recognise a PI3K-RBD domain in the interval 272 to 363 (RKSEANEVWE…YRCPGFVVRR (92 aa)). One can recognise a C2 PI3K-type domain in the interval 430 to 588 (LDSNLMIRPV…VKMPNEAQYK (159 aa)). Residues 607-793 (DYEACIGDPG…SLLMEAYLRG (187 aa)) enclose the PIK helical domain. Residues 858–1159 (VIEKAIVLGS…NWLFHAMKHY (302 aa)) enclose the PI3K/PI4K catalytic domain. The tract at residues 864–870 (VLGSAKQ) is G-loop. A catalytic loop region spans residues 1028 to 1036 (GIKDRHSDN). The activation loop stretch occupies residues 1047 to 1073 (HIDFGHILGHGKTKLGIQRDRQPFILT).

This sequence belongs to the PI3/PI4-kinase family.

The catalysed reaction is a 1,2-diacyl-sn-glycero-3-phospho-(1D-myo-inositol) + ATP = a 1,2-diacyl-sn-glycero-3-phospho-(1D-myo-inositol-3-phosphate) + ADP + H(+). Phosphatidylinositol 3-kinase homolog that regulates longevity and diapause. Promotes cell survival during embryonic development by recruiting akt-1/2 to the plasma membrane through the production of PtdIns(3,4,5)P3. Could function in the development or neuroendocrine signaling of the dauer pathway. Mediates susceptibility to enteropathogenic E.coli infection. May negatively regulate AYI interneuron neurite outgrowth. Plays a role in aversive olfactory learning when an odor is associated with food deprivation. Regulates this process by promoting the nuclear relocalization of egl-4 in AWC olfactory neurons after odor conditioning. The protein is Phosphatidylinositol 3-kinase age-1 (age-1) of Caenorhabditis briggsae.